Consider the following 171-residue polypeptide: Peptide deformylase (171 aa).

Residues Cys-91 and His-133 each coordinate Fe cation. The active site involves Glu-134. His-137 serves as a coordination point for Fe cation.

This sequence belongs to the polypeptide deformylase family. Requires Fe(2+) as cofactor.

The enzyme catalyses N-terminal N-formyl-L-methionyl-[peptide] + H2O = N-terminal L-methionyl-[peptide] + formate. In terms of biological role, removes the formyl group from the N-terminal Met of newly synthesized proteins. Requires at least a dipeptide for an efficient rate of reaction. N-terminal L-methionine is a prerequisite for activity but the enzyme has broad specificity at other positions. This Hamiltonella defensa subsp. Acyrthosiphon pisum (strain 5AT) protein is Peptide deformylase.